The primary structure comprises 205 residues: High frequency lysogenization protein HflD homolog (205 aa).

It belongs to the HflD family.

The protein resides in the cytoplasm. It is found in the cell inner membrane. This Shewanella piezotolerans (strain WP3 / JCM 13877) protein is High frequency lysogenization protein HflD homolog.